A 203-amino-acid polypeptide reads, in one-letter code: Ras-related protein Rab-13 (203 aa).

The GTP site is built by S17, G18, G20, K21, T22, C23, and T40. Position 22 (T22) interacts with Mg(2+). The Switch 1 signature appears at 31 to 45 (DNFNNTYISTIGIDF). T40 contributes to the Mg(2+) binding site. Glycyl lysine isopeptide (Lys-Gly) (interchain with G-Cter in ubiquitin) cross-links involve residues K46 and K58. D63 is a binding site for Mg(2+). Positions 63-80 (DTAGQERFKTITTAYYRG) match the Switch 2 motif. Positions 66, 121, 122, 124, 152, and 153 each coordinate GTP. A disordered region spans residues 173–203 (SGGRRSGNHSKPSSTDLKPSDKKNTNKCSLG). Position 178 is a phosphoserine (S178). C200 carries the post-translational modification Cysteine methyl ester. A lipid anchor (S-geranylgeranyl cysteine) is attached at C200. The propeptide at 201 to 203 (SLG) is removed in mature form.

Belongs to the small GTPase superfamily. Rab family. Interacts (GTP-bound form) with MICALL2; competes with RAB8A and is involved in tight junctions assembly. Interacts (GTP-bound form) with MICALL1. Interacts (GTP-bound form) with MICAL1, MICAL3, MICALCL, EHBP1 and EHBP1L1; ternary complexes of RAB8A, RAB13 and either MICAL1 or EHBP1L1 are possible. Interacts with PRKACA; downstream effector of RAB13 involved in tight junction assembly. Interacts with GRB2; may recruit RAB13 to the leading edge of migrating endothelial cells where it can activate RHOA. Interacts (isoprenylated form) with PDE6D; dissociates RAB13 from membranes. Interacts with BICDL2/BICDR2. Interacts with LEPROT and LEPROTL1. Mg(2+) is required as a cofactor. Ubiquitinated via 'Lys-11'-linked ubiquitination on Lys-46 and Lys-58; impairing the recruitment of guanosine diphosphate (GDP) dissociation inhibitor 1/GDI1.

It is found in the cell membrane. It localises to the cytoplasmic vesicle membrane. The protein resides in the cell junction. The protein localises to the tight junction. Its subcellular location is the golgi apparatus. It is found in the trans-Golgi network membrane. It localises to the recycling endosome membrane. The protein resides in the cell projection. The protein localises to the lamellipodium. It carries out the reaction GTP + H2O = GDP + phosphate + H(+). Its activity is regulated as follows. Regulated by guanine nucleotide exchange factors (GEFs) including DENND1C, which promote the exchange of bound GDP for free GTP. Regulated by GTPase activating proteins (GAPs) which increase the GTP hydrolysis activity. Inhibited by GDP dissociation inhibitors (GDIs). Activated in response to insulin. In terms of biological role, the small GTPases Rab are key regulators of intracellular membrane trafficking, from the formation of transport vesicles to their fusion with membranes. Rabs cycle between an inactive GDP-bound form and an active GTP-bound form that is able to recruit to membranes different sets of downstream effectors directly responsible for vesicle formation, movement, tethering and fusion. RAB13 is involved in endocytic recycling and regulates the transport to the plasma membrane of transmembrane proteins like the tight junction protein OCLN/occludin. Thereby, it regulates the assembly and the activity of tight junctions. Moreover, it may also regulate tight junction assembly by activating the PKA signaling pathway and by reorganizing the actin cytoskeleton through the activation of the downstream effectors PRKACA and MICALL2 respectively. Through its role in tight junction assembly, may play a role in the establishment of Sertoli cell barrier. Plays also a role in angiogenesis through regulation of endothelial cells chemotaxis. Also involved in neurite outgrowth. Has also been proposed to play a role in post-Golgi membrane trafficking from the TGN to the recycling endosome. Finally, it has been involved in insulin-induced transport to the plasma membrane of the glucose transporter GLUT4 and therefore may play a role in glucose homeostasis. The polypeptide is Ras-related protein Rab-13 (RAB13) (Mesocricetus auratus (Golden hamster)).